The chain runs to 204 residues: Ubiquitin-conjugating enzyme E2 S (204 aa).

The region spanning 14-160 (QIIKQVAREI…AKMFTEIHAK (147 aa)) is the UBC core domain. Cys98 serves as the catalytic Glycyl thioester intermediate. The segment covering 165 to 176 (SSNNISEGQQES) has biased composition (polar residues). The disordered stretch occupies residues 165–204 (SSNNISEGQQESLPGKKRVAVNEKMCDKKKKDKKRALKRL). The segment covering 191–204 (DKKKKDKKRALKRL) has biased composition (basic residues).

Belongs to the ubiquitin-conjugating enzyme family.

The enzyme catalyses S-ubiquitinyl-[E1 ubiquitin-activating enzyme]-L-cysteine + [E2 ubiquitin-conjugating enzyme]-L-cysteine = [E1 ubiquitin-activating enzyme]-L-cysteine + S-ubiquitinyl-[E2 ubiquitin-conjugating enzyme]-L-cysteine.. It functions in the pathway protein modification; protein ubiquitination. In terms of biological role, catalyzes the covalent attachment of ubiquitin to other proteins. Acts as an essential factor of the anaphase promoting complex/cyclosome (APC/C), a cell cycle-regulated ubiquitin ligase that controls progression through mitosis. Acts by specifically elongating polyubiquitin chains initiated by the E2 enzyme UBCH10 on APC/C substrates, enhancing the degradation of APC/C substrates by the proteasome and promoting mitotic exit. This Nematostella vectensis (Starlet sea anemone) protein is Ubiquitin-conjugating enzyme E2 S.